We begin with the raw amino-acid sequence, 501 residues long: Xylulose kinase (501 aa).

81–82 (MH) is a binding site for substrate. The active-site Proton acceptor is Asp-239.

This sequence belongs to the FGGY kinase family.

The enzyme catalyses D-xylulose + ATP = D-xylulose 5-phosphate + ADP + H(+). Catalyzes the phosphorylation of D-xylulose to D-xylulose 5-phosphate. This is Xylulose kinase from Lactococcus lactis subsp. lactis (strain IL1403) (Streptococcus lactis).